The following is a 335-amino-acid chain: MKISRSLSTVEVHTGGEAFRIVTSGLPRLPGDTIVQRRAWLKAHADEIRRALMFEPRGHADMYGGYLTEPVSPNADFGVIFVHNEGYSDHCGHGVIALSTAAVELGWVQRTVPETRVGIDAPCGFIEAFVQWDGEHAGPVRFVNVPSFIWRRDVSVDTPSFGTVTGDIAYGGAFYFYVDGAPFDLPVRESAVEKLIRFGAEVKAAANATYPVVHPEIPEINHIYGTIIANAPRHAGSTQANCCVFADREVDRSPTGSGTGGRVAQLYQRGLLAAGDTLVNESIVGTVFKGRVLRETTVGDFPAVIPEVEGSAHICGFANWIVDERDPLTYGFLVR.

Catalysis depends on Cys-91, which acts as the Proton acceptor. Residues 92–93, His-222, and 256–257 contribute to the substrate site; these read GH and GS.

Belongs to the proline racemase family. As to quaternary structure, homodimer.

It carries out the reaction trans-3-hydroxy-L-proline = 1-pyrroline-2-carboxylate + H2O. Functionally, catalyzes the dehydration of trans-3-hydroxy-L-proline (t3LHyp) to Delta(1)-pyrroline-2-carboxylate (Pyr2C). Does not possess neither proline racemase nor 4-hydroxyproline 2-epimerase activities. This chain is Trans-3-hydroxy-L-proline dehydratase, found in Burkholderia cenocepacia (strain HI2424).